The chain runs to 202 residues: Orotate phosphoribosyltransferase (202 aa).

Residues Arg94, Lys98, His100, and 120 to 128 each bind 5-phospho-alpha-D-ribose 1-diphosphate; that span reads EDLISTGGS. Ser124 contacts orotate.

Belongs to the purine/pyrimidine phosphoribosyltransferase family. PyrE subfamily. Homodimer. It depends on Mg(2+) as a cofactor.

The catalysed reaction is orotidine 5'-phosphate + diphosphate = orotate + 5-phospho-alpha-D-ribose 1-diphosphate. It participates in pyrimidine metabolism; UMP biosynthesis via de novo pathway; UMP from orotate: step 1/2. In terms of biological role, catalyzes the transfer of a ribosyl phosphate group from 5-phosphoribose 1-diphosphate to orotate, leading to the formation of orotidine monophosphate (OMP). In Staphylococcus haemolyticus (strain JCSC1435), this protein is Orotate phosphoribosyltransferase.